The sequence spans 629 residues: G1-specific transcription factors activator MSA1 (629 aa).

Basic residues predominate over residues 1-11 (MDKSMIKKRGR). Disordered stretches follow at residues 1–60 (MDKS…KRRL), 83–106 (STPT…NDSY), 217–286 (YCDT…SSLQ), 455–485 (VQVQ…NMNS), and 586–629 (PNLH…IDDQ). The span at 21-37 (PLQSPMAHSSMQVQKQG) shows a compositional bias: polar residues. Residues 245 to 260 (IETSASPIGSARNNNI) are compositionally biased toward polar residues. 2 stretches are compositionally biased toward low complexity: residues 261–277 (LLSQ…QLKP) and 455–475 (VQVQ…RQFQ). S268 is modified (phosphoserine). Basic and acidic residues predominate over residues 614-629 (KQDDARTALKRLIDDQ).

As to quaternary structure, interacts with transcription complexes SCB-binding factor (SBF) and MCB-binding factor (MBF) at their target promoters. Interacts with MBP1 and SWI6. Post-translationally, phosphorylated by CDC28.

Activator of G1-specific transcription factors, MBF and SBF. Promotes both the timing of G1-specific gene transcription and cell cycle initiation. Associates with SBF- and MBF-regulated target promoters and this binding is maximal during the G1 phase, prior to maximum budding. Affects cell cycle initiation by advancing the timing of transcription of G1-specific genes. Overexpression advances the timing of SBF-dependent transcription and budding. Depletion delays both indicators of cell cycle initiation. The polypeptide is G1-specific transcription factors activator MSA1 (MSA1) (Saccharomyces cerevisiae (strain ATCC 204508 / S288c) (Baker's yeast)).